The sequence spans 204 residues: Guanylate kinase (204 aa).

Residues 3 to 181 (GTLIIITAPS…ALDDLVAVVR (179 aa)) form the Guanylate kinase-like domain. ATP is bound at residue 10–17 (APSGAGKT).

Belongs to the guanylate kinase family.

The protein resides in the cytoplasm. It catalyses the reaction GMP + ATP = GDP + ADP. Essential for recycling GMP and indirectly, cGMP. The polypeptide is Guanylate kinase (Aromatoleum aromaticum (strain DSM 19018 / LMG 30748 / EbN1) (Azoarcus sp. (strain EbN1))).